Here is an 87-residue protein sequence, read N- to C-terminus: Type 3 secretion system needle filament protein (87 aa).

This sequence belongs to the SctF family. In terms of assembly, the core secretion machinery of the T3SS is composed of approximately 20 different proteins, including cytoplasmic components, a base, an export apparatus and a needle. This subunit polymerizes and forms the helical needle filament. Forms high-order oligomers in vitro. Forms a stable ternary complex with the YscE-YscG chaperone. Interacts directly with YscG but makes very little direct contact with YscE. Interacts with the needle adapter protein YscI/SctI.

The protein localises to the secreted. It localises to the cell surface. With respect to regulation, the secretion and/or polymerization may be controlled by the type III secretion system regulator YopR. Interaction with YscE-YscG chaperone prevents premature polymerization of YscF/SctF in the bacterial cytosol and is required for its stability and efficient secretion. Interaction with the needle adapter protein YscI/SctI is required for YscF/SctF secretion, needle assembly and Yop secretion. The N-terminus varies among bacterial species, not only in amino acid composition but also in the number of amino acids, and may function in manipulating the host response to the advantage of the bacteria. In Y.pestis, the N-terminus can function to decrease cytokine induction, perhaps contributing to a favorable immune environment leading to survival of Y.pestis within the eukaryotic host. Its function is as follows. Component of the type III secretion system (T3SS), also called injectisome, which is used to inject bacterial effector proteins into eukaryotic host cells. YscF/SctF forms the external needle filament that protrudes from the bacterial surface. Essential for the calcium-dependent regulation of T3SS and Yop secretion. Required to block Yop secretion in the presence of extracellular calcium. May be the extracellular T3SS component that senses extracellular calcium and/or participates in transmitting the calcium signal to the cytoplasmic compartment where the block in secretion is initiated. Functionally, during infection, can induce innate immune responses. The needle proteins interact with host TLR2 or TLR4, and induce signaling by NF-kappa-B and/or AP-1. This activation is MyD88 dependent and results in increased expression of cytokines, including TNF-alpha, IL-6 and IL-8. Innate immune responses are modulated by the N-terminal region of YscF/SctF. This chain is Type 3 secretion system needle filament protein, found in Yersinia pestis.